The sequence spans 905 residues: DNA mismatch repair protein MutS (905 aa).

The segment at 1–95 (MELSLQGSLF…PAWGHHSQLK (95 aa)) is disordered. The span at 38 to 50 (NLSDADLSKDALA) shows a compositional bias: basic and acidic residues. Residue 721 to 728 (GPNASGKS) coordinates ATP.

This sequence belongs to the DNA mismatch repair MutS family.

In terms of biological role, this protein is involved in the repair of mismatches in DNA. It is possible that it carries out the mismatch recognition step. This protein has a weak ATPase activity. This is DNA mismatch repair protein MutS from Synechococcus sp. (strain CC9902).